The primary structure comprises 52 residues: uncharacterized protein (52 aa).

This is an uncharacterized protein from Saccharomyces cerevisiae (strain ATCC 204508 / S288c) (Baker's yeast).